A 354-amino-acid chain; its full sequence is UDP-3-O-acylglucosamine N-acyltransferase (354 aa).

His-250 acts as the Proton acceptor in catalysis.

Belongs to the transferase hexapeptide repeat family. LpxD subfamily. As to quaternary structure, homotrimer.

It carries out the reaction a UDP-3-O-[(3R)-3-hydroxyacyl]-alpha-D-glucosamine + a (3R)-hydroxyacyl-[ACP] = a UDP-2-N,3-O-bis[(3R)-3-hydroxyacyl]-alpha-D-glucosamine + holo-[ACP] + H(+). Its pathway is bacterial outer membrane biogenesis; LPS lipid A biosynthesis. In terms of biological role, catalyzes the N-acylation of UDP-3-O-acylglucosamine using 3-hydroxyacyl-ACP as the acyl donor. Is involved in the biosynthesis of lipid A, a phosphorylated glycolipid that anchors the lipopolysaccharide to the outer membrane of the cell. In Methylococcus capsulatus (strain ATCC 33009 / NCIMB 11132 / Bath), this protein is UDP-3-O-acylglucosamine N-acyltransferase.